A 404-amino-acid polypeptide reads, in one-letter code: Argininosuccinate synthase (404 aa).

Residues 11–19 and Ala40 each bind ATP; that span reads AYSGGLDTS. Residues Tyr92 and Ser97 each contribute to the L-citrulline site. Position 122 (Gly122) interacts with ATP. The L-aspartate site is built by Thr124, Asn128, and Asp129. Position 128 (Asn128) interacts with L-citrulline. Residues Arg132, Ser181, Ser190, Glu266, and Tyr278 each contribute to the L-citrulline site.

It belongs to the argininosuccinate synthase family. Type 1 subfamily. In terms of assembly, homotetramer.

Its subcellular location is the cytoplasm. It catalyses the reaction L-citrulline + L-aspartate + ATP = 2-(N(omega)-L-arginino)succinate + AMP + diphosphate + H(+). It functions in the pathway amino-acid biosynthesis; L-arginine biosynthesis; L-arginine from L-ornithine and carbamoyl phosphate: step 2/3. The polypeptide is Argininosuccinate synthase (Moritella abyssi).